We begin with the raw amino-acid sequence, 337 residues long: Putative 4-hydroxythreonine-4-phosphate dehydrogenase (337 aa).

A divalent metal cation contacts are provided by His-172, His-216, and His-271.

The protein belongs to the PdxA family. Homodimer. Requires Zn(2+) as cofactor. Mg(2+) serves as cofactor. It depends on Co(2+) as a cofactor.

It localises to the cytoplasm. It carries out the reaction 4-(phosphooxy)-L-threonine + NAD(+) = 3-amino-2-oxopropyl phosphate + CO2 + NADH. It participates in cofactor biosynthesis; pyridoxine 5'-phosphate biosynthesis; pyridoxine 5'-phosphate from D-erythrose 4-phosphate: step 4/5. Catalyzes the NAD(P)-dependent oxidation of 4-(phosphooxy)-L-threonine (HTP) into 2-amino-3-oxo-4-(phosphooxy)butyric acid which spontaneously decarboxylates to form 3-amino-2-oxopropyl phosphate (AHAP). This is Putative 4-hydroxythreonine-4-phosphate dehydrogenase from Pasteurella multocida (strain Pm70).